The chain runs to 281 residues: Ribosomal protein L11 methyltransferase (281 aa).

S-adenosyl-L-methionine is bound by residues T131, G152, D174, and N217.

The protein belongs to the methyltransferase superfamily. PrmA family.

Its subcellular location is the cytoplasm. The enzyme catalyses L-lysyl-[protein] + 3 S-adenosyl-L-methionine = N(6),N(6),N(6)-trimethyl-L-lysyl-[protein] + 3 S-adenosyl-L-homocysteine + 3 H(+). Functionally, methylates ribosomal protein L11. The polypeptide is Ribosomal protein L11 methyltransferase (Phocaeicola vulgatus (strain ATCC 8482 / DSM 1447 / JCM 5826 / CCUG 4940 / NBRC 14291 / NCTC 11154) (Bacteroides vulgatus)).